The primary structure comprises 261 residues: Probable enoyl-CoA hydratase EchA17 (261 aa).

This sequence belongs to the enoyl-CoA hydratase/isomerase family.

The enzyme catalyses a (3S)-3-hydroxyacyl-CoA = a (2E)-enoyl-CoA + H2O. It carries out the reaction a 4-saturated-(3S)-3-hydroxyacyl-CoA = a (3E)-enoyl-CoA + H2O. In terms of biological role, could possibly oxidize fatty acids using specific components. This chain is Probable enoyl-CoA hydratase EchA17 (echA17), found in Mycobacterium bovis (strain BCG / Pasteur 1173P2).